Consider the following 443-residue polypeptide: tRNA modification GTPase MnmE (443 aa).

Residues arginine 23, glutamate 81, and lysine 119 each contribute to the (6S)-5-formyl-5,6,7,8-tetrahydrofolate site. Residues glycine 214 to isoleucine 369 enclose the TrmE-type G domain. GTP-binding positions include asparagine 224 to threonine 229, serine 243 to threonine 249, and aspartate 268 to glycine 271. 2 residues coordinate Mg(2+): serine 228 and threonine 249. Lysine 443 is a (6S)-5-formyl-5,6,7,8-tetrahydrofolate binding site.

The protein belongs to the TRAFAC class TrmE-Era-EngA-EngB-Septin-like GTPase superfamily. TrmE GTPase family. As to quaternary structure, homodimer. Heterotetramer of two MnmE and two MnmG subunits. The cofactor is K(+).

The protein localises to the cytoplasm. Functionally, exhibits a very high intrinsic GTPase hydrolysis rate. Involved in the addition of a carboxymethylaminomethyl (cmnm) group at the wobble position (U34) of certain tRNAs, forming tRNA-cmnm(5)s(2)U34. The sequence is that of tRNA modification GTPase MnmE from Anaplasma marginale (strain St. Maries).